Consider the following 248-residue polypeptide: DNA repair protein RecO (248 aa).

The protein belongs to the RecO family.

In terms of biological role, involved in DNA repair and RecF pathway recombination. The polypeptide is DNA repair protein RecO (Oleidesulfovibrio alaskensis (strain ATCC BAA-1058 / DSM 17464 / G20) (Desulfovibrio alaskensis)).